A 179-amino-acid polypeptide reads, in one-letter code: ATP synthase subunit delta (179 aa).

This sequence belongs to the ATPase delta chain family. F-type ATPases have 2 components, F(1) - the catalytic core - and F(0) - the membrane proton channel. F(1) has five subunits: alpha(3), beta(3), gamma(1), delta(1), epsilon(1). F(0) has three main subunits: a(1), b(2) and c(10-14). The alpha and beta chains form an alternating ring which encloses part of the gamma chain. F(1) is attached to F(0) by a central stalk formed by the gamma and epsilon chains, while a peripheral stalk is formed by the delta and b chains.

It is found in the cell inner membrane. Functionally, f(1)F(0) ATP synthase produces ATP from ADP in the presence of a proton or sodium gradient. F-type ATPases consist of two structural domains, F(1) containing the extramembraneous catalytic core and F(0) containing the membrane proton channel, linked together by a central stalk and a peripheral stalk. During catalysis, ATP synthesis in the catalytic domain of F(1) is coupled via a rotary mechanism of the central stalk subunits to proton translocation. This protein is part of the stalk that links CF(0) to CF(1). It either transmits conformational changes from CF(0) to CF(1) or is implicated in proton conduction. This chain is ATP synthase subunit delta, found in Cupriavidus pinatubonensis (strain JMP 134 / LMG 1197) (Cupriavidus necator (strain JMP 134)).